The primary structure comprises 208 residues: MAATSSYTACTKFSMLGWIGGKRELRKRRAFFISAQQQAEVEESQQVNAQEEEQEKMKQQGKQKLPRPVEPQVNVKSKNMSREYGGQWLSSVTRHVRIYAAYIDPVTCEFDQTQMDKLTLILDPTNEFVWTSETCNKVYAYFQELVDHYEGAPLTEYTLRLIGSDIEHYIRKLLYDGEIKYNMNARVLNFSMGKPRILFNDGLPQNVQ.

A chloroplast-targeting transit peptide spans 1-21; that stretch reads MAATSSYTACTKFSMLGWIGG. Positions 37 to 49 are enriched in low complexity; sequence QQAEVEESQQVNA. Positions 37-70 are disordered; sequence QQAEVEESQQVNAQEEEQEKMKQQGKQKLPRPVE.

This sequence belongs to the NDH complex subunit M family. Part of the chloroplast NDH complex, composed of a mixture of chloroplast and nucleus encoded subunits. Component of the NDH subcomplex A, at least composed of ndhH, ndhI, ndhJ, ndhK, ndhL, ndhM, ndhN and ndhO.

It localises to the plastid. Its subcellular location is the chloroplast thylakoid membrane. The catalysed reaction is a plastoquinone + NADH + (n+1) H(+)(in) = a plastoquinol + NAD(+) + n H(+)(out). The enzyme catalyses a plastoquinone + NADPH + (n+1) H(+)(in) = a plastoquinol + NADP(+) + n H(+)(out). In terms of biological role, NDH shuttles electrons from NAD(P)H:plastoquinone, via FMN and iron-sulfur (Fe-S) centers, to quinones in the photosynthetic chain and possibly in a chloroplast respiratory chain. The immediate electron acceptor for the enzyme in this species is believed to be plastoquinone. Couples the redox reaction to proton translocation, and thus conserves the redox energy in a proton gradient. This Vitis vinifera (Grape) protein is NAD(P)H-quinone oxidoreductase subunit M, chloroplastic.